The chain runs to 409 residues: 4-hydroxy-3-methylbut-2-en-1-yl diphosphate synthase (flavodoxin) (409 aa).

The [4Fe-4S] cluster site is built by cysteine 298, cysteine 301, cysteine 344, and glutamate 351.

It belongs to the IspG family. It depends on [4Fe-4S] cluster as a cofactor.

The catalysed reaction is (2E)-4-hydroxy-3-methylbut-2-enyl diphosphate + oxidized [flavodoxin] + H2O + 2 H(+) = 2-C-methyl-D-erythritol 2,4-cyclic diphosphate + reduced [flavodoxin]. It participates in isoprenoid biosynthesis; isopentenyl diphosphate biosynthesis via DXP pathway; isopentenyl diphosphate from 1-deoxy-D-xylulose 5-phosphate: step 5/6. In terms of biological role, converts 2C-methyl-D-erythritol 2,4-cyclodiphosphate (ME-2,4cPP) into 1-hydroxy-2-methyl-2-(E)-butenyl 4-diphosphate. This is 4-hydroxy-3-methylbut-2-en-1-yl diphosphate synthase (flavodoxin) from Dechloromonas aromatica (strain RCB).